An 81-amino-acid chain; its full sequence is Three-finger toxin MALT0057C (81 aa).

A signal peptide spans 1–21 (MKTLLLTLVVVTIVCLDFGHT). Disulfide bonds link cysteine 24-cysteine 43, cysteine 38-cysteine 60, cysteine 62-cysteine 73, and cysteine 74-cysteine 79.

Belongs to the three-finger toxin family. Short-chain subfamily. Type I alpha-neurotoxin sub-subfamily. As to expression, expressed by the venom gland.

Its subcellular location is the secreted. In terms of biological role, binds to muscle nicotinic acetylcholine receptor (nAChR) and inhibit acetylcholine from binding to the receptor, thereby impairing neuromuscular transmission. The sequence is that of Three-finger toxin MALT0057C from Micrurus altirostris (Uruguayan coral snake).